We begin with the raw amino-acid sequence, 274 residues long: Hematopoietically-expressed homeobox protein hhex (274 aa).

A DNA-binding region (homeobox) is located at residues 139-198 (RKGGQVRFSNDQTIELEKKFETQKYLSPPERKRLAKMLQLSERQVKTWFQNRRAKWRRLK). Positions 197 to 274 (LKQENPQGNK…GDKGFYNCAH (78 aa)) are disordered. A compositionally biased stretch (polar residues) spans 237–248 (DEPTSSPTSQET). The span at 249–263 (LDSEVSDDSDQEVDI) shows a compositional bias: acidic residues.

Expressed in the most dorsoanterior endomesoderm of the blastula and gastrula embryo, and later is restricted to the forming liver diverticulum.

Its subcellular location is the nucleus. Recognizes the DNA sequence 5'-ATTAA-3'. Transcriptional repressor. Regulates the differentiation of both endothelial and blood cells. Probably plays a role in the proliferation of vascular endothelial cells during blood vessel development. Establishes anterior identity at two levels; acts early to enhance canonical wnt-signaling by repressing expression of tle4, and acts later to inhibit nodal-signaling by directly targeting nodal/nr1 and nodal2/nr2. May play a role in liver development. Induces heart development. The chain is Hematopoietically-expressed homeobox protein hhex from Xenopus tropicalis (Western clawed frog).